The following is a 300-amino-acid chain: GTPase Era (300 aa).

In terms of domain architecture, Era-type G spans 4-173 (KYGIVAIVGK…INTIKQYLHK (170 aa)). The G1 stretch occupies residues 12–19 (GKPNVGKS). 12–19 (GKPNVGKS) is a GTP binding site. The tract at residues 38–42 (QTTRN) is G2. The interval 59 to 62 (DTPG) is G3. GTP is bound by residues 59 to 63 (DTPGF) and 122 to 125 (SKAE). Positions 122–125 (SKAE) are G4. The tract at residues 152 to 154 (ISA) is G5. One can recognise a KH type-2 domain in the interval 204–282 (LNHEVPHGVG…SLTIFVKVEN (79 aa)).

This sequence belongs to the TRAFAC class TrmE-Era-EngA-EngB-Septin-like GTPase superfamily. Era GTPase family. In terms of assembly, monomer.

Its subcellular location is the cytoplasm. The protein resides in the cell membrane. An essential GTPase that binds both GDP and GTP, with rapid nucleotide exchange. Plays a role in 16S rRNA processing and 30S ribosomal subunit biogenesis and possibly also in cell cycle regulation and energy metabolism. This Ureaplasma urealyticum serovar 10 (strain ATCC 33699 / Western) protein is GTPase Era.